A 314-amino-acid chain; its full sequence is Aromatic prenyltransferase (314 aa).

This sequence belongs to the aromatic prenyltransferase family.

Prenyltransferase that attaches isoprenoid moieties to carbon atoms of aromatic substrates in an enzyme-catalyzed Friedel-Crafts reaction. The sequence is that of Aromatic prenyltransferase from Arthroderma otae (strain ATCC MYA-4605 / CBS 113480) (Microsporum canis).